A 302-amino-acid chain; its full sequence is RNA polymerase II holoenzyme cyclin-like subunit (302 aa).

The 90-residue stretch at 53 to 142 folds into the Cyclin N-terminal domain; it reads QQLIKLGKRM…VGECEFSLIS (90 aa).

This sequence belongs to the cyclin family. Cyclin C subfamily. In terms of assembly, component of the srb8-11 complex, a regulatory module of the Mediator complex.

The protein localises to the nucleus. In terms of biological role, component of the srb8-11 complex. The srb8-11 complex is a regulatory module of the Mediator complex which is itself involved in regulation of basal and activated RNA polymerase II-dependent transcription. The srb8-11 complex may be involved in the transcriptional repression of a subset of genes regulated by Mediator. It may inhibit the association of the Mediator complex with RNA polymerase II to form the holoenzyme complex. The srb8-11 complex phosphorylates the C-terminal domain (CTD) of the largest subunit of RNA polymerase II. In Emericella nidulans (strain FGSC A4 / ATCC 38163 / CBS 112.46 / NRRL 194 / M139) (Aspergillus nidulans), this protein is RNA polymerase II holoenzyme cyclin-like subunit (ssn8).